We begin with the raw amino-acid sequence, 318 residues long: NAD kinase (318 aa).

Asp-80 (proton acceptor) is an active-site residue. Residues 80-81, Arg-85, 155-156, Asp-185, and 196-201 contribute to the NAD(+) site; these read DG, NE, and TAYAFS.

This sequence belongs to the NAD kinase family. A divalent metal cation serves as cofactor.

It is found in the cytoplasm. The enzyme catalyses NAD(+) + ATP = ADP + NADP(+) + H(+). Functionally, involved in the regulation of the intracellular balance of NAD and NADP, and is a key enzyme in the biosynthesis of NADP. Catalyzes specifically the phosphorylation on 2'-hydroxyl of the adenosine moiety of NAD to yield NADP. In Corynebacterium efficiens (strain DSM 44549 / YS-314 / AJ 12310 / JCM 11189 / NBRC 100395), this protein is NAD kinase.